The sequence spans 105 residues: Tyrosine-protein phosphatase 12 (105 aa).

The 105-residue stretch at 1-105 (WRMIWEKRVE…NLRRIVRTEF (105 aa)) folds into the Tyrosine-protein phosphatase domain. Asp84 serves as a coordination point for substrate.

Belongs to the protein-tyrosine phosphatase family.

The enzyme catalyses O-phospho-L-tyrosyl-[protein] + H2O = L-tyrosyl-[protein] + phosphate. The protein is Tyrosine-protein phosphatase 12 (STY-12) of Styela plicata (Wrinkled sea squirt).